The sequence spans 278 residues: Lipoyl-[GcvH]:protein N-lipoyltransferase (278 aa).

Residues 44–250 (RMAPSTVRGW…SLRHYAGDLV (207 aa)) enclose the BPL/LPL catalytic domain. Residue Cys-149 is the Acyl-thioester intermediate of the active site.

It belongs to the octanoyltransferase LipL family.

It catalyses the reaction N(6)-[(R)-lipoyl]-L-lysyl-[glycine-cleavage complex H protein] + L-lysyl-[lipoyl-carrier protein] = L-lysyl-[glycine-cleavage complex H protein] + N(6)-[(R)-lipoyl]-L-lysyl-[lipoyl-carrier protein]. The protein operates within protein modification; protein lipoylation via exogenous pathway. In terms of biological role, catalyzes the amidotransfer (transamidation) of the lipoyl moiety from lipoyl-GcvH to the lipoyl domain of the E2 subunit of lipoate-dependent enzymes. Takes part in a pathway for scavenging of lipoic acid derived from eukaryotic host cells. Cannot use lipoyl-tripeptide (DK(L)A), lipoamide (LD), or free lipoate as substrate. This Listeria monocytogenes serovar 1/2a (strain ATCC BAA-679 / EGD-e) protein is Lipoyl-[GcvH]:protein N-lipoyltransferase.